A 148-amino-acid chain; its full sequence is Lysozyme C, milk isozyme (148 aa).

Residues 1–18 (MKALLIVGLLLLSVAVQG) form the signal peptide. Residues 19–148 (KKFQRCELAR…LRSYVQGCRV (130 aa)) form the C-type lysozyme domain. Intrachain disulfides connect cysteine 24-cysteine 146, cysteine 48-cysteine 134, cysteine 83-cysteine 99, and cysteine 95-cysteine 113. Active-site residues include glutamate 53 and aspartate 71.

It belongs to the glycosyl hydrolase 22 family.

It carries out the reaction Hydrolysis of (1-&gt;4)-beta-linkages between N-acetylmuramic acid and N-acetyl-D-glucosamine residues in a peptidoglycan and between N-acetyl-D-glucosamine residues in chitodextrins.. In terms of biological role, lysozymes have primarily a bacteriolytic function; those in tissues and body fluids are associated with the monocyte-macrophage system and enhance the activity of immunoagents. This is Lysozyme C, milk isozyme from Bos taurus (Bovine).